Here is a 1383-residue protein sequence, read N- to C-terminus: MEDRGPPVFAEDWKCLSESPPVQEGPAAQATFEPSKPLSIAHKHLSRKNGLSRLCQSRMALSEDRWSSYCLSSLAAQNICTSKLHCAAAPEYADPTAGPLGSTSCCSLLRGLASGCSGSLLSTPVCNPNKAVFTVDAKTTEILVANDKACSLLGYSSHDLIGQKLAQFFLKSDSEVVEALSEEHVEADGHAAVVFGTVVDIVSRIGEKIPVSVWIKRLQQDRGLCCVVVLEPVERVSAWVAFQSDGTITSCDSLFAHLHGFTSPKDVVGQCVIDLIPSMQLPPPGQHIPKSLKIQRSVGRARDGTTFPLSLKLKSKPSGRAVADSEAASEPGYQASVWVFCTISGLITLLPDGTIYGVNHSFALMLFGYGKTELLGKNITFLIPGFYHYMDLTYDSSVQLPDLVNCLDIGRKSGPGEMNSDAQHNWELASGAQGPRIDVVLARDHMPSQDETLKLVGGQVSSRTQTRLETGYKILPSSACQPSLGVDSNPEDGEQSLLTDQQSIPKRNLPAHGGQNQLDTSEISLPVLKEHLLSEIQKNISEESPLTHRKWLSKVQQNPTKGSLPIHEEQLLFAGQHIHVLGKEDPSAAESYRESLLEESKSKPVDAKLFASCEDSEPLVSVKDRGSSVDTCNLHQEAQLELMGVSSPNPWADATMPEPHTTGQIAGGSLTYCPQYRSEWASQQRGQDSAPSPSGMACVLLGTPTLDEPWPGVRNDREELQTCLIKEQLSKSSCEGNLGISRVELVPEEHPPFTAPVSFCDLGGRDLHASRSGSSSACYALATDLPGVLEAVEAQEADVNSYSWNLKELFLKDQTDRTPSHCSCTTSELSEAPSLSVVGSDLDVGILHRQTSDILVDREMLLLTGTYFDLSEGQRFQEMGAGHDRAELSNISLVSSEHYETSDIESPGCDPPLPDPGPNDMCLSAEKPRPSAQITSTPVARGATSLQQEIQEGIYSGSCYHRDGLQLSIQFEVKRVELQGSATLFCCWLVKDLFHSHRDSATRTRLFLASLPSSTHSMPELSGSSFGEVLRAKPWFEESPTPAELEGLAACEGEYDYKYNTISPLGSGAFGFVWTAVEKECNKEVVVKFIKKEKVLEDCWIEDPKLGRVTLEIAILSKVDHANIIKVLDIFENQEFFQLVMEKHGSGMDLFAFIDHHPCLDEPLASFIFRQLVSAVGYLHSQGIIHRDIKDENIVIAEDFTIKLIDFGSAAYLERGKLFYTFCGTIEYCAPEVLIGNPYRGPELEMWSLGVTLYTLIFEENPFCEVEETMEAVIHPPFLVSQELMSLLSGLLQPCPEQRTTLEKLIRDPWVTQPVNLASYTWEEVCRTNQPESGLLSAASLEIGSRSPSEMAQREGLCGPPAPRETRGDQHCLHLKDPSLPVS.

Met1 is subject to N-acetylmethionine. Ser19 carries the post-translational modification Phosphoserine. At Thr31 the chain carries Phosphothreonine. 2 PAS domains span residues 117–188 and 333–400; these read SGSL…VEAD and YQAS…SVQL. At Ser1000 the chain carries Phosphoserine. Residues 1059 to 1311 form the Protein kinase domain; that stretch reads YNTISPLGSG…LEKLIRDPWV (253 aa). ATP contacts are provided by residues 1065–1073, Lys1088, and 1142–1149; these read LGSGAFGFV and EKHGSGMD. Asp1188 acts as the Proton acceptor in catalysis. Residue Asp1206 participates in ATP binding. A phosphothreonine; by autocatalysis mark is found at Thr1221 and Thr1225. Residues 1344–1383 form a disordered region; it reads GSRSPSEMAQREGLCGPPAPRETRGDQHCLHLKDPSLPVS. Over residues 1364 to 1377 the composition is skewed to basic and acidic residues; it reads RETRGDQHCLHLKD.

This sequence belongs to the protein kinase superfamily. CAMK Ser/Thr protein kinase family. In terms of processing, autophosphorylated on Thr-1221 and Thr-1225. Autophosphorylation is activated by phospholipids. In terms of tissue distribution, ubiquitously expressed. Strongly up-regulated in postmeiotic germ cells during spermatogenesis.

It is found in the cytoplasm. The protein localises to the nucleus. The catalysed reaction is L-seryl-[protein] + ATP = O-phospho-L-seryl-[protein] + ADP + H(+). The enzyme catalyses L-threonyl-[protein] + ATP = O-phospho-L-threonyl-[protein] + ADP + H(+). Protein kinase activity is inhibited by the first PAS domain: binding of an unidentified ligand desinhibits the protein kinase activity. May be activated by autophosphorylation on Thr-1221 and Thr-1225. Autophosphorylation is enhanced upon phosphatidylinositol monophosphate (phosphatidylinositol 4-phosphate) binding and inhibited upon phosphatidylinositol bi- and tri-phosphate binding. In contrast, phosphorylation of target proteins is inhibited upon all phosphatidylinositol-binding (phosphatidylinositol mono- bi- and tri-phosphate). Functionally, serine/threonine-protein kinase involved in energy homeostasis and protein translation. Phosphorylates EEF1A1, GYS1, PDX1 and RPS6. Probably plays a role under changing environmental conditions (oxygen, glucose, nutrition), rather than under standard conditions. Acts as a sensor involved in energy homeostasis: regulates glycogen synthase synthesis by mediating phosphorylation of GYS1, leading to GYS1 inactivation. May be involved in glucose-stimulated insulin production in pancreas and regulation of glucagon secretion by glucose in alpha cells; however such data require additional evidences. May play a role in regulation of protein translation by phosphorylating EEF1A1, leading to increase translation efficiency. May also participate in respiratory regulation. In Mus musculus (Mouse), this protein is PAS domain-containing serine/threonine-protein kinase (Pask).